The primary structure comprises 347 residues: 3-isopropylmalate dehydrogenase (347 aa).

Substrate contacts are provided by Arg-94, Arg-104, Arg-128, and Asp-219. The Mg(2+) site is built by Asp-219, Asp-243, and Asp-247. 279-291 provides a ligand contact to NAD(+); the sequence is GSAPDIAGQGKAD.

Belongs to the isocitrate and isopropylmalate dehydrogenases family. LeuB type 2 subfamily. As to quaternary structure, homodimer. It depends on Mg(2+) as a cofactor. Mn(2+) is required as a cofactor.

It is found in the cytoplasm. It catalyses the reaction (2R,3S)-3-isopropylmalate + NAD(+) = 4-methyl-2-oxopentanoate + CO2 + NADH. Its pathway is amino-acid biosynthesis; L-leucine biosynthesis; L-leucine from 3-methyl-2-oxobutanoate: step 3/4. In terms of biological role, catalyzes the oxidation of 3-carboxy-2-hydroxy-4-methylpentanoate (3-isopropylmalate) to 3-carboxy-4-methyl-2-oxopentanoate. The product decarboxylates to 4-methyl-2 oxopentanoate. This is 3-isopropylmalate dehydrogenase from Streptomyces griseus subsp. griseus (strain JCM 4626 / CBS 651.72 / NBRC 13350 / KCC S-0626 / ISP 5235).